Consider the following 196-residue polypeptide: ATP-dependent Clp protease proteolytic subunit (196 aa).

The active-site Nucleophile is Ser-98. Residue His-123 is part of the active site.

Belongs to the peptidase S14 family. In terms of assembly, fourteen ClpP subunits assemble into 2 heptameric rings which stack back to back to give a disk-like structure with a central cavity, resembling the structure of eukaryotic proteasomes.

Its subcellular location is the cytoplasm. It carries out the reaction Hydrolysis of proteins to small peptides in the presence of ATP and magnesium. alpha-casein is the usual test substrate. In the absence of ATP, only oligopeptides shorter than five residues are hydrolyzed (such as succinyl-Leu-Tyr-|-NHMec, and Leu-Tyr-Leu-|-Tyr-Trp, in which cleavage of the -Tyr-|-Leu- and -Tyr-|-Trp bonds also occurs).. Its function is as follows. Cleaves peptides in various proteins in a process that requires ATP hydrolysis. Has a chymotrypsin-like activity. Plays a major role in the degradation of misfolded proteins. This Actinobacillus pleuropneumoniae serotype 7 (strain AP76) protein is ATP-dependent Clp protease proteolytic subunit.